The sequence spans 421 residues: Probable indole-3-pyruvate monooxygenase YUCCA9 (421 aa).

29 to 34 contacts FAD; it reads GAGPSG. 196–201 contacts NADP(+); sequence GCGNSG.

Belongs to the FMO family. FAD serves as cofactor.

The catalysed reaction is indole-3-pyruvate + NADPH + O2 + H(+) = (indol-3-yl)acetate + CO2 + NADP(+) + H2O. Its pathway is plant hormone metabolism; auxin biosynthesis. Functionally, involved in auxin biosynthesis. Belongs to the set of redundant YUCCA genes probably responsible for auxin biosynthesis in roots. The protein is Probable indole-3-pyruvate monooxygenase YUCCA9 (YUC9) of Arabidopsis thaliana (Mouse-ear cress).